We begin with the raw amino-acid sequence, 852 residues long: Probable nitrite reductase-hydroxylamine oxidoreductase fusion protein (852 aa).

Residues 1–27 form the signal peptide; it reads MLNKSAALVPVVLAFLFLFLCFQCLYA. Positions 28–327 are nitrite reductase domain; that stretch reads DIRCLTGKDG…DEGRKTLSAP (300 aa). 2 Plastocyanin-like domains span residues 72-169 and 217-307; these read VPGP…IVEP and GETW…VEEG. Residues histidine 102 and histidine 145 each coordinate Cu cation. The segment at 328–827 is hydroxylamine oxidoreductase domain; it reads GQDRQPPTLE…ISWWWGTAQG (500 aa). Heme contacts are provided by cysteine 406, cysteine 409, histidine 410, histidine 426, cysteine 463, cysteine 466, histidine 467, histidine 471, cysteine 483, cysteine 486, histidine 487, histidine 505, histidine 537, cysteine 543, cysteine 546, histidine 547, histidine 550, cysteine 563, cysteine 566, histidine 567, cysteine 614, cysteine 617, histidine 618, cysteine 686, cysteine 689, histidine 690, and histidine 813.

The protein in the N-terminal section; belongs to the multicopper oxidase family. It depends on Cu cation as a cofactor. Heme serves as cofactor.

It is found in the encapsulin nanocompartment. The catalysed reaction is hydroxylamine + 4 Fe(III)-[cytochrome c] + H2O = 4 Fe(II)-[cytochrome c] + nitrite + 5 H(+). The enzyme catalyses nitric oxide + Fe(III)-[cytochrome c] + H2O = Fe(II)-[cytochrome c] + nitrite + 2 H(+). Its function is as follows. A nitrite reductase-hydroxylamine oxidoreductase protein that probably functions in the type 1 encapsulin nanocompartment. Probably involved in reductive catalysis. Targeted to the encapsulin nanocompartment by association with the diheme domain of the encapsulin shell protein (AC Q1Q6L7). Catalyzes the reduction of nitrite to nitric oxide (NO). Catalyzes the oxidation of hydroxylamine to nitrite. In Kuenenia stuttgartiensis, this protein is Probable nitrite reductase-hydroxylamine oxidoreductase fusion protein.